The chain runs to 407 residues: Probable sodium/metabolite cotransporter BASS5, chloroplastic (407 aa).

A chloroplast-targeting transit peptide spans 1–57; the sequence is MGVISPTETLFLKSQHRLLQPRNYSYALAFHSTRRVANFPRNSFSSLGSCSVDFPLR. 9 helical membrane-spanning segments follow: residues 101-121, 122-142, 162-184, 191-213, 222-242, 252-272, 286-306, 317-337, and 379-399; these read FIPH…PSFT, WFKP…VGIN, YIGQ…VSLF, GAGI…TFLT, IVMT…LSLL, VFGM…AGLL, PFLP…PLAL, ATIL…GYFF, and LVGV…VSLV.

This sequence belongs to the bile acid:sodium symporter (BASS) (TC 2.A.28) family. As to expression, widely expressed.

It localises to the membrane. The protein localises to the plastid. It is found in the chloroplast envelope. Functionally, plastidic transporter involved in the biosynthesis of aliphatic glucosinolates by translocating the biosynthetic intermediates of Met-derived glucosinolates across chloroplast membranes. Transports short chain (C2) alpha-keto acids, such as 4-methylsulfanyl-2-oxobutanoic acid, from the cytosol to the chloroplast where they are subjected to chain elongation cycles. Also functions in the transport of chain-elongated (C3 to C8) Met derivatives from the chloroplast to the cytosol. Does not seem to be involved in the transport of indole-derived glucosinolates. The chain is Probable sodium/metabolite cotransporter BASS5, chloroplastic (BASS5) from Arabidopsis thaliana (Mouse-ear cress).